Here is a 176-residue protein sequence, read N- to C-terminus: ATP-dependent protease subunit HslV (176 aa).

Thr-5 is an active-site residue. The Na(+) site is built by Ser-161, Cys-164, and Thr-167.

It belongs to the peptidase T1B family. HslV subfamily. In terms of assembly, a double ring-shaped homohexamer of HslV is capped on each side by a ring-shaped HslU homohexamer. The assembly of the HslU/HslV complex is dependent on binding of ATP.

It localises to the cytoplasm. The catalysed reaction is ATP-dependent cleavage of peptide bonds with broad specificity.. Its activity is regulated as follows. Allosterically activated by HslU binding. Functionally, protease subunit of a proteasome-like degradation complex believed to be a general protein degrading machinery. In Caldanaerobacter subterraneus subsp. tengcongensis (strain DSM 15242 / JCM 11007 / NBRC 100824 / MB4) (Thermoanaerobacter tengcongensis), this protein is ATP-dependent protease subunit HslV.